Consider the following 776-residue polypeptide: Ribosomal RNA large subunit methyltransferase K/L (776 aa).

The THUMP domain occupies 68–183 (DLYKICLWSR…DKQAELYLDL (116 aa)).

The protein belongs to the methyltransferase superfamily. RlmKL family.

Its subcellular location is the cytoplasm. It catalyses the reaction guanosine(2445) in 23S rRNA + S-adenosyl-L-methionine = N(2)-methylguanosine(2445) in 23S rRNA + S-adenosyl-L-homocysteine + H(+). The catalysed reaction is guanosine(2069) in 23S rRNA + S-adenosyl-L-methionine = N(2)-methylguanosine(2069) in 23S rRNA + S-adenosyl-L-homocysteine + H(+). Its function is as follows. Specifically methylates the guanine in position 2445 (m2G2445) and the guanine in position 2069 (m7G2069) of 23S rRNA. This is Ribosomal RNA large subunit methyltransferase K/L from Psychrobacter cryohalolentis (strain ATCC BAA-1226 / DSM 17306 / VKM B-2378 / K5).